Here is a 67-residue protein sequence, read N- to C-terminus: Toxin Cex8 (67 aa).

Residue alanine 1 is a signal peptide. The 64-residue stretch at 2–65 folds into the LCN-type CS-alpha/beta domain; that stretch reads KEGYLVNIYT…SYPYPEKSCG (64 aa). Cystine bridges form between cysteine 13-cysteine 64, cysteine 17-cysteine 40, cysteine 26-cysteine 45, and cysteine 30-cysteine 47. Cysteine amide is present on cysteine 64. A propeptide spanning residues 65–67 is cleaved from the precursor; it reads GRK.

Belongs to the long (4 C-C) scorpion toxin superfamily. Sodium channel inhibitor family. Beta subfamily. Expressed by the venom gland.

The protein resides in the secreted. Its function is as follows. Beta toxins bind voltage-independently at site-4 of sodium channels (Nav) and shift the voltage of activation toward more negative potentials thereby affecting sodium channel activation and promoting spontaneous and repetitive firing. The polypeptide is Toxin Cex8 (Centruroides exilicauda (Bark scorpion)).